The primary structure comprises 168 residues: Photosystem I assembly protein Ycf3 (168 aa).

3 TPR repeats span residues 35-68 (AFTY…EIDP), 72-105 (SYIL…NPFL), and 120-153 (GEQA…TPGN).

It belongs to the Ycf3 family.

It is found in the plastid. The protein localises to the chloroplast thylakoid membrane. Functionally, essential for the assembly of the photosystem I (PSI) complex. May act as a chaperone-like factor to guide the assembly of the PSI subunits. In Daucus carota (Wild carrot), this protein is Photosystem I assembly protein Ycf3.